A 171-amino-acid polypeptide reads, in one-letter code: Ribosome maturation factor RimM (171 aa).

Residues 97–169 enclose the PRC barrel domain; it reads DGEFYYHEII…RVDVSIMEGL (73 aa).

It belongs to the RimM family. In terms of assembly, binds ribosomal protein uS19.

It is found in the cytoplasm. Its function is as follows. An accessory protein needed during the final step in the assembly of 30S ribosomal subunit, possibly for assembly of the head region. Essential for efficient processing of 16S rRNA. May be needed both before and after RbfA during the maturation of 16S rRNA. It has affinity for free ribosomal 30S subunits but not for 70S ribosomes. The polypeptide is Ribosome maturation factor RimM (Lactococcus lactis subsp. lactis (strain IL1403) (Streptococcus lactis)).